Consider the following 361-residue polypeptide: Histidinol-phosphate aminotransferase (361 aa).

Lys-219 bears the N6-(pyridoxal phosphate)lysine mark.

It belongs to the class-II pyridoxal-phosphate-dependent aminotransferase family. Histidinol-phosphate aminotransferase subfamily. Homodimer. The cofactor is pyridoxal 5'-phosphate.

The enzyme catalyses L-histidinol phosphate + 2-oxoglutarate = 3-(imidazol-4-yl)-2-oxopropyl phosphate + L-glutamate. It participates in amino-acid biosynthesis; L-histidine biosynthesis; L-histidine from 5-phospho-alpha-D-ribose 1-diphosphate: step 7/9. The protein is Histidinol-phosphate aminotransferase of Cereibacter sphaeroides (strain ATCC 17023 / DSM 158 / JCM 6121 / CCUG 31486 / LMG 2827 / NBRC 12203 / NCIMB 8253 / ATH 2.4.1.) (Rhodobacter sphaeroides).